The following is a 267-amino-acid chain: Tryptophan synthase alpha chain (267 aa).

Active-site proton acceptor residues include E47 and D58.

This sequence belongs to the TrpA family. In terms of assembly, tetramer of two alpha and two beta chains.

The catalysed reaction is (1S,2R)-1-C-(indol-3-yl)glycerol 3-phosphate + L-serine = D-glyceraldehyde 3-phosphate + L-tryptophan + H2O. It participates in amino-acid biosynthesis; L-tryptophan biosynthesis; L-tryptophan from chorismate: step 5/5. Functionally, the alpha subunit is responsible for the aldol cleavage of indoleglycerol phosphate to indole and glyceraldehyde 3-phosphate. The sequence is that of Tryptophan synthase alpha chain from Prosthecochloris aestuarii (strain DSM 271 / SK 413).